A 428-amino-acid polypeptide reads, in one-letter code: Glutamate-1-semialdehyde 2,1-aminomutase (428 aa).

Lys267 carries the N6-(pyridoxal phosphate)lysine modification.

Belongs to the class-III pyridoxal-phosphate-dependent aminotransferase family. HemL subfamily. Homodimer. Pyridoxal 5'-phosphate is required as a cofactor.

It localises to the cytoplasm. It catalyses the reaction (S)-4-amino-5-oxopentanoate = 5-aminolevulinate. The protein operates within porphyrin-containing compound metabolism; protoporphyrin-IX biosynthesis; 5-aminolevulinate from L-glutamyl-tRNA(Glu): step 2/2. The sequence is that of Glutamate-1-semialdehyde 2,1-aminomutase from Trichlorobacter lovleyi (strain ATCC BAA-1151 / DSM 17278 / SZ) (Geobacter lovleyi).